The sequence spans 400 residues: Phosphoglycerate kinase (400 aa).

Residues 24–26 (DFN), Arg40, 63–66 (HFGR), Arg121, and Arg154 contribute to the substrate site. ATP contacts are provided by residues Lys205, Gly296, Glu327, and 356–359 (GGDS).

Monomer.

It localises to the cytoplasm. The catalysed reaction is (2R)-3-phosphoglycerate + ATP = (2R)-3-phospho-glyceroyl phosphate + ADP. The protein operates within carbohydrate degradation; glycolysis; pyruvate from D-glyceraldehyde 3-phosphate: step 2/5. In Nostoc sp. (strain PCC 7120 / SAG 25.82 / UTEX 2576), this protein is Phosphoglycerate kinase.